The primary structure comprises 317 residues: WD repeat-containing protein 82 (317 aa).

6 WD repeats span residues 21 to 60 (ENTDKINAIDFAPNGEHLISCSEDDQIVIYDCEKGTQSRT), 107 to 146 (GHTKKVISLCISPVEDTFLSGSLDKTLRLWDLRSPNCQGL), 148 to 186 (HLSGRPIAAYDPEGLIFAAGVNSESIKLYDLRSFDKGPF), 194 to 233 (EKECDWTGLKFSRDGKTILISTNGSVIRLVDAFHGTPLQT), 238 to 278 (PNNK…KVSV), and 282 to 317 (DHPGPVQCVQFNPKYMMLASACTNMAFWLPTSEEGL).

This sequence belongs to the WD repeat SWD2 family. As to quaternary structure, component of the SET1 complex, composed at least of the catalytic subunit Set1, wds/WDR5, Wdr82, Rbbp5, ash2, Cfp1/CXXC1, hcf and Dpy-30L1. Interacts with male-specific lethal (MSL) histone acetyltransferase complex at least composed of mof, msl-1, msl-2 and msl-3. Interacts with su(sable).

It is found in the nucleus. In terms of biological role, component of the SET1 complex that specifically di- and trimethylates 'Lys-4' of histone H3. Together with su(sable), part of a transcription termination checkpoint that promotes transcription termination of aberrant RNAs and their subsequent degradation by the nuclear exosome. The polypeptide is WD repeat-containing protein 82 (Drosophila melanogaster (Fruit fly)).